The primary structure comprises 1090 residues: Protein transport protein Sec24A (1090 aa).

Disordered regions lie at residues 1–260 (MAQP…AHNT) and 272–325 (TPQL…TQTP). Low complexity predominate over residues 8-28 (AARGAAASLQAQNGAASASGS). 3 stretches are compositionally biased toward polar residues: residues 29-55 (PYTNGPVHNTLMSPQVSSSQGYDSQPP), 138-151 (WQYNYPSTGPQTNH), and 162-184 (GNPNLTADHQYVSSGDPALQTSF). Residues 194–236 (QNPPLPPTFQPGAPPGPPPAGGPPPSRGPAPQKTPPRAAPPPS) are compositionally biased toward pro residues. Composition is skewed to polar residues over residues 237-258 (FNSAVNQEGITSNANNGSTAAH), 274-286 (QLVNQNPKTSRSV), and 313-325 (SYPSGPQAFTQTP). The Zn(2+) site is built by Cys428, Cys431, Cys449, and Cys452. Positions 428 to 452 (CRSCRTYINPFVNFLDQRRWKCNLC) are zinc finger-like. The Gelsolin-like repeat unit spans residues 963–1036 (PQPPILQLSV…PESARIAAFI (74 aa)).

The protein belongs to the SEC23/SEC24 family. SEC24 subfamily. COPII is composed of at least five proteins: the Sec23/24 complex, the Sec13/31 complex and Sar1. Interacts with TMED2. Interacts (as part of the Sec23/24 complex) with SEC22B; recruits SEC22B into COPII-coated vesicles for its transport from the endoplasmic reticulum to the Golgi. Interacts with STING1; promoting STING1 translocation to COPII vesicles in a STEEP1-dependent manner. Interacts with TMEM39A. Interacts with SACM1L; this interaction is reduced in the absence of TMEM39A. Interacts with kinase FAM20C; transport of FAM20C from the endoplasmic reticulum to the Golgi is likely to be mediated by COPII vesicles.

It is found in the cytoplasmic vesicle. It localises to the COPII-coated vesicle membrane. Its subcellular location is the endoplasmic reticulum membrane. The protein localises to the cytoplasm. The protein resides in the cytosol. Functionally, component of the coat protein complex II (COPII) which promotes the formation of transport vesicles from the endoplasmic reticulum (ER). The coat has two main functions, the physical deformation of the endoplasmic reticulum membrane into vesicles and the selection of cargo molecules for their transport to the Golgi complex. Plays a central role in cargo selection within the COPII complex and together with SEC24B may have a different specificity compared to SEC24C and SEC24D. May package preferentially cargos with cytoplasmic DxE or LxxLE motifs and may also recognize conformational epitopes. The chain is Protein transport protein Sec24A from Mus musculus (Mouse).